Consider the following 276-residue polypeptide: Carboxysome assembly protein CcmO (276 aa).

BMC domains follow at residues 16-100 (ALGV…AVLP) and 120-204 (AIGL…DSLP). Disordered stretches follow at residues 200–219 (MDSL…LQLP) and 252–276 (QSAL…RDDQ).

The protein belongs to the bacterial microcompartments protein family. In terms of assembly, homooligomerizes, possibly as a trimer, interacts with CcmK2 in the carboxysome.

It localises to the carboxysome. In terms of biological role, required for formation of the carboxysome, a polyhedral inclusion where RuBisCO (ribulose bisphosphate carboxylase, rbcL-rbcS) is sequestered. Required for recruitment of major shell protein CcmK2 to the pre-carboxysome. Suggested to be a carboxysome shell protein, but it is not detected in gels, mass spectrometry or by protein sequencing. Its function is as follows. Beta-carboxysome assembly initiates when soluble RuBisCO is condensed into a liquid matrix in a pre-carboxysome by the RbcS-like domains of probably both CcmM58 and CcmM35. CcmN interacts with the N-terminus of CcmM58, and then recruits the CcmK2 major shell protein via CcmN's encapsulation peptide. Shell formation requires CcmK proteins and CcmO. CcmL caps the otherwise elongated carboxysome. Once fully encapsulated carboxysomes are formed, they migrate within the cell probably via interactions with the cytoskeleton. The sequence is that of Carboxysome assembly protein CcmO from Synechococcus elongatus (strain ATCC 33912 / PCC 7942 / FACHB-805) (Anacystis nidulans R2).